Reading from the N-terminus, the 451-residue chain is MNAHPKEIWEQCLNIIKGETTEVSFNTWIKSITPISIENDTFMLTVPNDLTKGILSNKYTDLIIRSLQMVTSQKYNVKFLISSELPEEFLTLDTINEQNIKGSIIVSDEMSAMLNPKYTFTSFVIGNSNRFAHAASLAVAESPAKAYNPLFIYGGVGLGKTHLMHAIGHHILHNNTSCKVVYVSSEKFTNELINSIKDDKNVEFRSKYRNIDVLLIDDIQFIAGKERTQEEFFHTFNALYEANKQIILSSDRPPKEIPTLEDRLRSRFEWGLIADIQPPDFETRMAILKKKADVEKLNIPNEVMAYIATKIKSNIRELEGALIRIVAFSSLTNKEISVDLAIEALKDIISSGQSKQVTIELIQDVVSNYYNLKVSDFKSSRRTRNVAFPRQIAMYLCRKLTDMSLPKIGEEFGGRDHTTVIHAYEKISNNLKKDESLKNAVNDLTKRLDQQ.

The segment at Met-1–Gln-73 is domain I, interacts with DnaA modulators. The tract at residues Gln-73–Ala-112 is domain II. The tract at residues Met-113–Ser-329 is domain III, AAA+ region. The ATP site is built by Gly-157, Gly-159, Lys-160, and Thr-161. A domain IV, binds dsDNA region spans residues Ser-330–Gln-451.

It belongs to the DnaA family. Oligomerizes as a right-handed, spiral filament on DNA at oriC.

Its subcellular location is the cytoplasm. In terms of biological role, plays an essential role in the initiation and regulation of chromosomal replication. ATP-DnaA binds to the origin of replication (oriC) to initiate formation of the DNA replication initiation complex once per cell cycle. Binds the DnaA box (a 9 base pair repeat at the origin) and separates the double-stranded (ds)DNA. Forms a right-handed helical filament on oriC DNA; dsDNA binds to the exterior of the filament while single-stranded (ss)DNA is stabiized in the filament's interior. The ATP-DnaA-oriC complex binds and stabilizes one strand of the AT-rich DNA unwinding element (DUE), permitting loading of DNA polymerase. After initiation quickly degrades to an ADP-DnaA complex that is not apt for DNA replication. Binds acidic phospholipids. This chain is Chromosomal replication initiator protein DnaA, found in Clostridium kluyveri (strain NBRC 12016).